Consider the following 2061-residue polypeptide: Myoferlin (2061 aa).

In terms of domain architecture, C2 1 spans 1–101 (MLRVIVESAS…TGDQSRSLPY (101 aa)). The Cytoplasmic segment spans residues 1–2025 (MLRVIVESAS…MKFIVWRRFK (2025 aa)). The disordered stretch occupies residues 123 to 172 (GYDPPSAPHPNDLSGPSVPGMGGDGEEDEGDEDRLDNAVRGPGPKGPVGT). Residues 146 to 156 (DGEEDEGDEDR) show a composition bias toward acidic residues. S174 bears the Phosphoserine mark. C2 domains lie at 181–300 (RLTK…RKWL) and 339–474 (DSDD…VEDF). Residues 186 to 281 (KNSRRMLSNK…RADCLMGEFK (96 aa)) form a necessary for interaction with EHD2 region. Residues 323–342 (LGTGDEPPPERRDRDNDSDD) form a disordered region. D390, D396, D444, D446, and D452 together coordinate Ca(2+). K553 is modified (N6-acetyllysine). S729 bears the Phosphoserine mark. Position 884 is an N6-acetyllysine (K884). The disordered stretch occupies residues 938–967 (ESRYPGGDWKPAEDTYTDANGDKAASPSEL). C2 domains are found at residues 1123–1251 (GANT…LLWH) and 1282–1410 (LPPQ…GKED). D1155, D1161, D1217, and D1219 together coordinate Ca(2+). K1507 is modified (N6-acetyllysine). C2 domains are found at residues 1536–1654 (PAPP…SHCG) and 1772–1920 (GPPG…EKCR). Positions 1569, 1575, 1624, 1626, 1891, 1894, and 1897 each coordinate Ca(2+). At S1915 the chain carries Phosphoserine. Residues 2026–2046 (WVIIGLLFLLILLLFVAVLLY) traverse the membrane as a helical segment. At 2047–2061 (SLPNYLSMKIVKPNV) the chain is on the extracellular side.

Belongs to the ferlin family. In terms of assembly, interacts with DNM2 and KDR. Interacts with EHD1. Interacts with EHD2; the interaction is direct. Interacts with RIPOR2. Requires Ca(2+) as cofactor. Expressed in myoblast and endothelial cells (at protein level). Highly expressed in cardiac and skeletal muscles. Also present in lung, and at very low levels in kidney, placenta and brain.

It localises to the cell membrane. The protein resides in the nucleus membrane. It is found in the cytoplasmic vesicle membrane. Its function is as follows. Calcium/phospholipid-binding protein that plays a role in the plasmalemma repair mechanism of endothelial cells that permits rapid resealing of membranes disrupted by mechanical stress. Involved in endocytic recycling. Implicated in VEGF signal transduction by regulating the levels of the receptor KDR. This Homo sapiens (Human) protein is Myoferlin (MYOF).